A 262-amino-acid chain; its full sequence is MWNLAGKKLSSRLLLGTACYPSLEHMQQAIHNSGTEVITISIKRQTSAGLDGESFWQAVKKLDCHLLPNTAGCRNAEAAINTAEIARELFNTHWIKLEVIGDDYNLQPEPFELIKAARILIDRGFEVFPYCTDDLVLCQKLVDAGCKILMPWGAPIGSGKGLINPYALETLRYRFPDITLIIDAGIGKPSHAVQVMELGFDGVLLNTAVALANHPALMATAFRHAVIAGHQAFTGGMMSERNVAHPSTPLIDTPFWHQVNNL.

The active-site Schiff-base intermediate with DXP is Lys-96. 1-deoxy-D-xylulose 5-phosphate is bound by residues Gly-157, 184–185 (AG), and 206–207 (NT).

The protein belongs to the ThiG family. In terms of assembly, homotetramer. Forms heterodimers with either ThiH or ThiS.

It is found in the cytoplasm. It carries out the reaction [ThiS sulfur-carrier protein]-C-terminal-Gly-aminoethanethioate + 2-iminoacetate + 1-deoxy-D-xylulose 5-phosphate = [ThiS sulfur-carrier protein]-C-terminal Gly-Gly + 2-[(2R,5Z)-2-carboxy-4-methylthiazol-5(2H)-ylidene]ethyl phosphate + 2 H2O + H(+). It functions in the pathway cofactor biosynthesis; thiamine diphosphate biosynthesis. In terms of biological role, catalyzes the rearrangement of 1-deoxy-D-xylulose 5-phosphate (DXP) to produce the thiazole phosphate moiety of thiamine. Sulfur is provided by the thiocarboxylate moiety of the carrier protein ThiS. In vitro, sulfur can be provided by H(2)S. The sequence is that of Thiazole synthase from Legionella pneumophila (strain Lens).